The primary structure comprises 140 residues: UPF0134 protein MPN_094 (140 aa).

The protein belongs to the UPF0134 family.

This Mycoplasma pneumoniae (strain ATCC 29342 / M129 / Subtype 1) (Mycoplasmoides pneumoniae) protein is UPF0134 protein MPN_094.